A 563-amino-acid polypeptide reads, in one-letter code: Arginine--tRNA ligase (563 aa).

Positions 121–131 (PNIAKPFSIGH) match the 'HIGH' region motif.

This sequence belongs to the class-I aminoacyl-tRNA synthetase family. In terms of assembly, monomer.

The protein localises to the cytoplasm. It carries out the reaction tRNA(Arg) + L-arginine + ATP = L-arginyl-tRNA(Arg) + AMP + diphosphate. The protein is Arginine--tRNA ligase of Streptococcus agalactiae serotype Ia (strain ATCC 27591 / A909 / CDC SS700).